Consider the following 303-residue polypeptide: MTLNLDDAKITAEVLTTALPYIQRFVDKLIVVKYGGNAMTDPALESSFARDIVLLKTVGMHPVVVHGGGPQVDNLLKELGRHSDRIDGMRVTDKSTMDIVEMVLGGSVNKSIVSLINKHGGCAIGLTGKDANLILAKKLMMEKIGTDGVAVPVDLGFVGDVVSVNKDVINMLIASDFIPVIAPLGVDEEGNTYNINADLVAGKVAEFLQAEKLMLLTNIKGVLGRDGEVVTGLTPKTVDSLIEDGTISGGMIPKIQCALDAVRSGVKSAVIVDGRVPHATLLEIFTNEGVGTLISRDLDLRSN.

Residues 68 to 69 (GG), R90, and N194 contribute to the substrate site.

This sequence belongs to the acetylglutamate kinase family. ArgB subfamily.

It is found in the cytoplasm. It carries out the reaction N-acetyl-L-glutamate + ATP = N-acetyl-L-glutamyl 5-phosphate + ADP. It functions in the pathway amino-acid biosynthesis; L-arginine biosynthesis; N(2)-acetyl-L-ornithine from L-glutamate: step 2/4. Its function is as follows. Catalyzes the ATP-dependent phosphorylation of N-acetyl-L-glutamate. The polypeptide is Acetylglutamate kinase (Psychrobacter arcticus (strain DSM 17307 / VKM B-2377 / 273-4)).